A 254-amino-acid polypeptide reads, in one-letter code: 4-hydroxy-tetrahydrodipicolinate reductase (254 aa).

Position 7–12 (7–12 (GASGRI)) interacts with NAD(+). Arg35 lines the NADP(+) pocket. Residues 91 to 93 (GTT) and 115 to 118 (AHNM) each bind NAD(+). The Proton donor/acceptor role is filled by His147. Residue His148 coordinates (S)-2,3,4,5-tetrahydrodipicolinate. Lys151 (proton donor) is an active-site residue. 157–158 (GT) is a (S)-2,3,4,5-tetrahydrodipicolinate binding site.

Belongs to the DapB family.

It is found in the cytoplasm. It carries out the reaction (S)-2,3,4,5-tetrahydrodipicolinate + NAD(+) + H2O = (2S,4S)-4-hydroxy-2,3,4,5-tetrahydrodipicolinate + NADH + H(+). It catalyses the reaction (S)-2,3,4,5-tetrahydrodipicolinate + NADP(+) + H2O = (2S,4S)-4-hydroxy-2,3,4,5-tetrahydrodipicolinate + NADPH + H(+). It functions in the pathway amino-acid biosynthesis; L-lysine biosynthesis via DAP pathway; (S)-tetrahydrodipicolinate from L-aspartate: step 4/4. Functionally, catalyzes the conversion of 4-hydroxy-tetrahydrodipicolinate (HTPA) to tetrahydrodipicolinate. This is 4-hydroxy-tetrahydrodipicolinate reductase from Helicobacter pylori (strain ATCC 700392 / 26695) (Campylobacter pylori).